We begin with the raw amino-acid sequence, 266 residues long: 14-3-3 protein homolog (266 aa).

A disordered region spans residues 154–177; the sequence is KQAADQAQESYQKATETAEGHSPA. Positions 158–168 are enriched in polar residues; the sequence is DQAQESYQKAT.

The protein belongs to the 14-3-3 family.

The sequence is that of 14-3-3 protein homolog from Neospora caninum (Coccidian parasite).